The following is a 522-amino-acid chain: Subtilisin-like protease 10 (522 aa).

The first 19 residues, 1 to 19 (MFFFKGVVAVLSFFSAVNA), serve as a signal peptide directing secretion. A propeptide spanning residues 20-117 (APFMKPNNGT…VERDQIGTSQ (98 aa)) is cleaved from the precursor. Positions 36–113 (SYIVLLKRDI…HVAHVERDQI (78 aa)) constitute an Inhibitor I9 domain. One can recognise a Peptidase S8 domain in the interval 127 to 405 (NWGLGRLSNS…KLLVNGANGT (279 aa)). Catalysis depends on charge relay system residues D159 and H190. N-linked (GlcNAc...) asparagine glycosylation occurs at N251. The Charge relay system role is filled by S348. Polar residues predominate over residues 383–397 (SASVKNPGPNTTNKL). The disordered stretch occupies residues 383 to 515 (SASVKNPGPN…GWNRPMWWNR (133 aa)). N-linked (GlcNAc...) asparagine glycosylation is found at N392 and N403. Pro residues predominate over residues 432-459 (SQNPPPGQNPPPGQNPPPEQPAPSPPAN).

Belongs to the peptidase S8 family.

Its subcellular location is the secreted. Its function is as follows. Secreted subtilisin-like serine protease with keratinolytic activity that contributes to pathogenicity. The protein is Subtilisin-like protease 10 (SUB10) of Trichophyton verrucosum (strain HKI 0517).